Here is a 358-residue protein sequence, read N- to C-terminus: Putative movement protein (358 aa).

Functionally, transports viral genome to neighboring plant cells directly through plasmosdesmata, without any budding. The movement protein allows efficient cell to cell propagation, by bypassing the host cell wall barrier (Potential). The chain is Putative movement protein from Raspberry bushy dwarf virus (isolate Malling Jewel raspberry/R15) (RBDV).